The following is a 322-amino-acid chain: Cytochrome c biogenesis protein CcsA (322 aa).

The next 7 membrane-spanning stretches (helical) occupy residues 9 to 29 (ILTH…LITL), 43 to 63 (GMIA…IYSG), 70 to 90 (LYES…VPKI), 142 to 162 (MLLS…LLVI), 226 to 246 (VISL…VWAN), 259 to 274 (ETWA…IYSH), and 287 to 307 (AIVA…VNLL).

The protein belongs to the CcmF/CycK/Ccl1/NrfE/CcsA family. In terms of assembly, may interact with Ccs1.

It localises to the plastid. It is found in the chloroplast thylakoid membrane. Its function is as follows. Required during biogenesis of c-type cytochromes (cytochrome c6 and cytochrome f) at the step of heme attachment. This Chloranthus spicatus (Chulantree) protein is Cytochrome c biogenesis protein CcsA.